The chain runs to 76 residues: Anaredoxin (76 aa).

Positions 24-66 constitute an HNH domain; sequence CMVCWEVNSKANGHHLIPYSEGGSADIQNMMTLCPSCHTKYHK.

Belongs to the HNH nuclease family.

In terms of biological role, putative P-450 reductase. The protein is Anaredoxin of Nostoc sp. (strain PCC 7120 / SAG 25.82 / UTEX 2576).